Here is a 123-residue protein sequence, read N- to C-terminus: MNGRIAVAIALGGALGALARFYISGILPVYKDFPVGTLLVNSIASFILGYIYGLLFWGIDVPADWRAFFGTGFCGALSTFSTFSYETFSLLREREYFLAALNISANVIITVSLVFIGFILARR.

The next 4 membrane-spanning stretches (helical) occupy residues 7–27 (VAIA…SGIL), 39–59 (LVNS…FWGI), 68–88 (FFGT…YETF), and 100–120 (ALNI…GFIL). Residues G75 and S78 each contribute to the Na(+) site.

It belongs to the fluoride channel Fluc/FEX (TC 1.A.43) family.

Its subcellular location is the cell membrane. It carries out the reaction fluoride(in) = fluoride(out). Its activity is regulated as follows. Na(+) is not transported, but it plays an essential structural role and its presence is essential for fluoride channel function. In terms of biological role, fluoride-specific ion channel. Important for reducing fluoride concentration in the cell, thus reducing its toxicity. In Thermococcus onnurineus (strain NA1), this protein is Fluoride-specific ion channel FluC.